The sequence spans 566 residues: Proline--tRNA ligase (566 aa).

Belongs to the class-II aminoacyl-tRNA synthetase family. ProS type 1 subfamily. As to quaternary structure, homodimer.

It is found in the cytoplasm. It catalyses the reaction tRNA(Pro) + L-proline + ATP = L-prolyl-tRNA(Pro) + AMP + diphosphate. Its function is as follows. Catalyzes the attachment of proline to tRNA(Pro) in a two-step reaction: proline is first activated by ATP to form Pro-AMP and then transferred to the acceptor end of tRNA(Pro). As ProRS can inadvertently accommodate and process non-cognate amino acids such as alanine and cysteine, to avoid such errors it has two additional distinct editing activities against alanine. One activity is designated as 'pretransfer' editing and involves the tRNA(Pro)-independent hydrolysis of activated Ala-AMP. The other activity is designated 'posttransfer' editing and involves deacylation of mischarged Ala-tRNA(Pro). The misacylated Cys-tRNA(Pro) is not edited by ProRS. This is Proline--tRNA ligase from Bacillus cytotoxicus (strain DSM 22905 / CIP 110041 / 391-98 / NVH 391-98).